We begin with the raw amino-acid sequence, 581 residues long: Putative protein phosphatase 2C 22 (581 aa).

Positions 1-21 (MVISVPLFSSVLLALVVAVPA) are cleaved as a signal peptide. A PPM-type phosphatase domain is found at 102–478 (KYASSAMQGL…NNATAILVQF (377 aa)). Positions 138, 139, 373, and 469 each coordinate Mn(2+). Residues 538–563 (SDEVAGGAAVAEQHQHNPEGGGEQQL) form a disordered region.

The protein belongs to the PP2C family. Mg(2+) is required as a cofactor. It depends on Mn(2+) as a cofactor.

The enzyme catalyses O-phospho-L-seryl-[protein] + H2O = L-seryl-[protein] + phosphate. It carries out the reaction O-phospho-L-threonyl-[protein] + H2O = L-threonyl-[protein] + phosphate. The polypeptide is Putative protein phosphatase 2C 22 (Oryza sativa subsp. japonica (Rice)).